A 342-amino-acid chain; its full sequence is Isopentenyl-diphosphate delta-isomerase (342 aa).

11 to 12 lines the substrate pocket; that stretch reads RK. FMN contacts are provided by residues serine 68, 69 to 71, serine 99, and asparagine 127; that span reads SMT. 99–101 is a substrate binding site; that stretch reads SMR. Glutamine 162 provides a ligand contact to substrate. Glutamate 163 contributes to the Mg(2+) binding site. Residues lysine 194, threonine 224, 274–276, and 295–296 each bind FMN; these read GLK and AG.

The protein belongs to the IPP isomerase type 2 family. As to quaternary structure, homooctamer. Dimer of tetramers. FMN serves as cofactor. Requires NADPH as cofactor. The cofactor is Mg(2+).

Its subcellular location is the cytoplasm. It catalyses the reaction isopentenyl diphosphate = dimethylallyl diphosphate. Its function is as follows. Involved in the biosynthesis of isoprenoids. Catalyzes the 1,3-allylic rearrangement of the homoallylic substrate isopentenyl (IPP) to its allylic isomer, dimethylallyl diphosphate (DMAPP). In Rickettsia africae (strain ESF-5), this protein is Isopentenyl-diphosphate delta-isomerase.